We begin with the raw amino-acid sequence, 152 residues long: Lipoprotein signal peptidase (152 aa).

A run of 2 helical transmembrane segments spans residues 55-75 and 85-105; these read NKMW…VFYM and LGIS…DRVF. Catalysis depends on residues Asp-111 and Asp-129. The chain crosses the membrane as a helical span at residues 124 to 144; that stretch reads VFNIADSALCIGVVLIIIQTL.

The protein belongs to the peptidase A8 family.

It is found in the cell membrane. The enzyme catalyses Release of signal peptides from bacterial membrane prolipoproteins. Hydrolyzes -Xaa-Yaa-Zaa-|-(S,diacylglyceryl)Cys-, in which Xaa is hydrophobic (preferably Leu), and Yaa (Ala or Ser) and Zaa (Gly or Ala) have small, neutral side chains.. The protein operates within protein modification; lipoprotein biosynthesis (signal peptide cleavage). Its function is as follows. This protein specifically catalyzes the removal of signal peptides from prolipoproteins. The chain is Lipoprotein signal peptidase from Bacillus cereus (strain AH187).